The chain runs to 1165 residues: Autophagy-related protein 11 (1165 aa).

2 coiled-coil regions span residues Asn239–Met304 and Asp670–Lys853.

This sequence belongs to the ATG11 family. In terms of assembly, homodimer and potential homooligomers.

The protein localises to the preautophagosomal structure membrane. Its function is as follows. Plays an essential role in both non-selective and selective autophagy such as mitophagy. Recruits mitochondria for their selective degradation via autophagy (mitophagy) during starvation, through its interaction with ATG32. Works as scaffold proteins that recruit ATG proteins to the pre-autophagosome (PAS), the site of vesicle/autophagosome formation. Required for ATG9 anterograde transport from the mitochondria to the PAS. The chain is Autophagy-related protein 11 from Candida albicans (strain SC5314 / ATCC MYA-2876) (Yeast).